A 789-amino-acid polypeptide reads, in one-letter code: SH3 domain-containing protein 19 (789 aa).

Disordered stretches follow at residues 24–170 (TNTE…PPRL), 209–404 (DDDV…RPKP), and 472–497 (TPLD…SGAP). The residue at position 65 (serine 65) is a Phosphoserine. Over residues 296 to 305 (SHSDRTRNPE) the composition is skewed to basic and acidic residues. The span at 335–351 (WRPPPKGAPERPPPPKL) shows a compositional bias: pro residues. A compositionally biased stretch (low complexity) spans 352–361 (PASKSSNKNL). Serine 368 is subject to Phosphoserine. SH3 domains lie at 414 to 476 (LSVP…PLDE), 494 to 553 (SGAP…VIVD), 570 to 629 (AKGP…LVGD), 660 to 719 (PPGE…PCPA), and 729 to 788 (PKGR…FLQV). Positions 474 to 484 (LDERPRGRPND) are enriched in basic and acidic residues. Positions 635 to 663 (ANILSTKVPPKTKNEDPGSNSQDSSPPGE) are disordered.

In terms of assembly, interacts with ADAM12. Isoform 2 (but not isoform 1) interacts with ADAM9, ADAM10, ADAM15 and ADAM17. Interacts with SH3GL1 SH3 domain. Interacts via SH3 3 and SH3 4 or SH3 4 and SH3 5 domains with SOS2. Probably forms a trimeric complex with SH3GL1 and SOS2. Interacts with SH3YL1. Expressed in hair follicles.

Its subcellular location is the cytoplasm. Functionally, may play a role in regulating A disintegrin and metalloproteases (ADAMs) in the signaling of EGFR-ligand shedding. May be involved in suppression of Ras-induced cellular transformation and Ras-mediated activation of ELK1. Plays a role in the regulation of cell morphology and cytoskeletal organization. In Mus musculus (Mouse), this protein is SH3 domain-containing protein 19 (Sh3d19).